Here is a 259-residue protein sequence, read N- to C-terminus: Global transcriptional regulator CodY (259 aa).

A GAF domain region spans residues 1–155 (MDLLTRTRKI…GATVVGMEIL (155 aa)). Residues 203–222 (ASKIADRVGITRSVIVNALR) constitute a DNA-binding region (H-T-H motif). Phosphoserine is present on Ser215.

This sequence belongs to the CodY family.

It is found in the cytoplasm. In terms of biological role, DNA-binding global transcriptional regulator which is involved in the adaptive response to starvation and acts by directly or indirectly controlling the expression of numerous genes in response to nutrient availability. During rapid exponential growth, CodY is highly active and represses genes whose products allow adaptation to nutrient depletion. This chain is Global transcriptional regulator CodY, found in Shouchella clausii (strain KSM-K16) (Alkalihalobacillus clausii).